The chain runs to 490 residues: Transcription factor MYB101 (490 aa).

The interval 1 to 21 is disordered; sequence MDGGGETTATATMEGRGLKKG. HTH myb-type domains follow at residues 15–67 and 68–122; these read GRGL…ANHL and RPNL…KRRQ. 2 consecutive DNA-binding regions (H-T-H motif) follow at residues 43 to 67 and 95 to 118; these read WNAV…ANHL and WARM…NTRM. Residues 168 to 206 form a disordered region; the sequence is YTNSSNTSSSSSSFSSSSSQPSKRLRPDPLVSTNPGLNP. A compositionally biased stretch (low complexity) spans 169-186; it reads TNSSNTSSSSSSFSSSSS.

In terms of tissue distribution, present mostly in flowers, siliques and floral shoot tips. Expression is restricted to the subapical pith cells of both vegetative and flowering plants and to the hypocotyl hook. Expressed in pollen grains and pollen tube. Mostly expressed in mature pollen grains, and, to a lower extent, in inflorescences and siliques.

The protein localises to the nucleus. Its function is as follows. Transcription activator. Binds to 5'-CAACTGTC-3' and/or 5'-TAACAAA-3' motif in target gene promoter (e.g. alpha-amylase) to promote their expression. Positive regulator of abscisic acid (ABA) responses leading to growth arrest during seed germination. Promotes the expression of aleurone-related genes (e.g. CP1, CP, GASA1, BXL1 and BXL2) in seeds. Together with MYB33 and MYB65, promotes the programmed cell death (PCD) leading to vacuolation of protein storage vacuoles (PSVs) in the aleurone layers during seed germination. Maybe involved in the regulation of leaves lamina morphogenesis. Involved in pollen grain development. Together with MYB97 and MYB120, functions as a male factor that controls pollen tube-synergid interaction in fertilization. Required for pollen tube growth arrest and sperm cell release in the female gametophyte, probably via the regulation of pollen tube-specific gene expression. The protein is Transcription factor MYB101 of Arabidopsis thaliana (Mouse-ear cress).